The following is a 305-amino-acid chain: tRNA uridine(34) hydroxylase (305 aa).

In terms of domain architecture, Rhodanese spans 125-219 (ADENTVVVDK…YLEEVPREQS (95 aa)). Residue Cys-179 is the Cysteine persulfide intermediate of the active site.

It belongs to the TrhO family.

The catalysed reaction is uridine(34) in tRNA + AH2 + O2 = 5-hydroxyuridine(34) in tRNA + A + H2O. Functionally, catalyzes oxygen-dependent 5-hydroxyuridine (ho5U) modification at position 34 in tRNAs. The chain is tRNA uridine(34) hydroxylase from Brucella abortus (strain S19).